Here is a 170-residue protein sequence, read N- to C-terminus: Small ribosomal subunit protein mS41 (170 aa).

The N-terminal 20 residues, 1–20 (MFRTLLSSTVRSIQLKPVTS), are a transit peptide targeting the mitochondrion.

It belongs to the mitochondrion-specific ribosomal protein mS41 family. As to quaternary structure, component of the mitochondrial small ribosomal subunit (mt-SSU).

The protein resides in the mitochondrion. Its function is as follows. Component of the mitochondrial ribosome (mitoribosome), a dedicated translation machinery responsible for the synthesis of mitochondrial genome-encoded proteins, including at least some of the essential transmembrane subunits of the mitochondrial respiratory chain. The mitoribosomes are attached to the mitochondrial inner membrane and translation products are cotranslationally integrated into the membrane. mS41 is involved in telomere length regulation. The protein is Small ribosomal subunit protein mS41 (FYV4) of Candida albicans (strain SC5314 / ATCC MYA-2876) (Yeast).